We begin with the raw amino-acid sequence, 227 residues long: MLKFIIGKKIGMTQVFDVKGNLMPVTVVEVGHCVVTDVRTVEKNGYSAVQLGFGEIKEKGLNKAQAVFFKRNNLSYKRTLKEFRVSEVAGFSVGHEIKADAFKAGDYVDVSAVTKGKGYAGVIKRHNFGMQPVSHGQSDRTRSRGSSGAQGPQKVLKGLKMSGHMGNEYVTVQKLLIVNVDAEKNVLLIKGSVPSANRGTLFISSTLKKIPKVLVAVVHKGTKVKKK.

The segment at 129 to 154 (GMQPVSHGQSDRTRSRGSSGAQGPQK) is disordered.

Belongs to the universal ribosomal protein uL3 family. Part of the 50S ribosomal subunit. Forms a cluster with proteins L14 and L19.

In terms of biological role, one of the primary rRNA binding proteins, it binds directly near the 3'-end of the 23S rRNA, where it nucleates assembly of the 50S subunit. The sequence is that of Large ribosomal subunit protein uL3 from Endomicrobium trichonymphae.